The sequence spans 161 residues: Protein-export protein SecB (161 aa).

It belongs to the SecB family. Homotetramer, a dimer of dimers. One homotetramer interacts with 1 SecA dimer.

It is found in the cytoplasm. One of the proteins required for the normal export of preproteins out of the cell cytoplasm. It is a molecular chaperone that binds to a subset of precursor proteins, maintaining them in a translocation-competent state. It also specifically binds to its receptor SecA. This Shewanella sp. (strain MR-7) protein is Protein-export protein SecB.